A 303-amino-acid chain; its full sequence is Porphobilinogen deaminase (303 aa).

Cys-240 is subject to S-(dipyrrolylmethanemethyl)cysteine.

The protein belongs to the HMBS family. In terms of assembly, monomer. The cofactor is dipyrromethane.

It carries out the reaction 4 porphobilinogen + H2O = hydroxymethylbilane + 4 NH4(+). Its pathway is porphyrin-containing compound metabolism; protoporphyrin-IX biosynthesis; coproporphyrinogen-III from 5-aminolevulinate: step 2/4. Functionally, tetrapolymerization of the monopyrrole PBG into the hydroxymethylbilane pre-uroporphyrinogen in several discrete steps. The protein is Porphobilinogen deaminase of Stenotrophomonas maltophilia (strain R551-3).